Here is a 20-residue protein sequence, read N- to C-terminus: Non-specific lipid-transfer protein-like protein (20 aa).

The protein belongs to the plant LTP family.

The polypeptide is Non-specific lipid-transfer protein-like protein (Jatropha curcas (Barbados nut)).